Here is a 623-residue protein sequence, read N- to C-terminus: Serine/threonine-protein kinase nrc-2 (623 aa).

The interval M1–R215 is disordered. Composition is skewed to basic and acidic residues over residues S27–H36 and L170–D180. Residues L199–A209 are compositionally biased toward low complexity. In terms of domain architecture, Protein kinase spans F242–F532. ATP-binding positions include I248–V256 and K271. Catalysis depends on D367, which acts as the Proton acceptor. Positions V569–V596 are disordered.

Belongs to the protein kinase superfamily. Ser/Thr protein kinase family. KIN82 subfamily.

It carries out the reaction L-seryl-[protein] + ATP = O-phospho-L-seryl-[protein] + ADP + H(+). The catalysed reaction is L-threonyl-[protein] + ATP = O-phospho-L-threonyl-[protein] + ADP + H(+). Its function is as follows. Controls entry of the cell into the asexual developmental program. Required to repress entry into the conidiation program. The sequence is that of Serine/threonine-protein kinase nrc-2 (nrc-2) from Neurospora crassa (strain ATCC 24698 / 74-OR23-1A / CBS 708.71 / DSM 1257 / FGSC 987).